Reading from the N-terminus, the 883-residue chain is uncharacterized protein (883 aa).

Residues 258-373 are disordered; that stretch reads INNQSDNQSN…NQFNKPDNEP (116 aa). 3 stretches are compositionally biased toward low complexity: residues 259-268, 277-317, and 324-333; these read NNQSDNQSNS, EPNG…SNSE, and NEPNTEPNTE. Residues 334 to 347 show a composition bias toward polar residues; sequence SNGQSNSELNNQSD. Residues 348-368 show a composition bias toward low complexity; it reads NHPNNEPNSEPNNEPNNQFNK.

Belongs to the mimivirus L137 family.

This is an uncharacterized protein from Acanthamoeba polyphaga mimivirus (APMV).